Here is a 130-residue protein sequence, read N- to C-terminus: Small ribosomal subunit protein uS9 (130 aa).

Residues 105–130 form a disordered region; that stretch reads TRDPRMKERKKYGLKGARRAPQFSKR. The span at 111 to 130 shows a compositional bias: basic residues; it reads KERKKYGLKGARRAPQFSKR.

It belongs to the universal ribosomal protein uS9 family.

This Bacillus pumilus (strain SAFR-032) protein is Small ribosomal subunit protein uS9.